The chain runs to 237 residues: MLDLTELENSLGVKFEQPSLLEQALIHTSWVNENPNHSSGSNERMEFLGDAVLGVIFADRLYHDFPDIQEGDLTRFRSLLVRRESLVRVALGINLGKYLYLGRGEDVSKGRFKPANLAGAFEAVLAAIYIDKGMDVTREVIFRLFKTEMERVQTLSSNIDYKSRLQELIQAQLQLTPRYRITNFSGPEHNRLFIAEVYAEDRVFAEGSGRSKKEAETNAAKVALQQFENSFTDEDNI.

The 130-residue stretch at 4–133 (LTELENSLGV…VLAAIYIDKG (130 aa)) folds into the RNase III domain. E46 is a Mg(2+) binding site. Catalysis depends on residues D50 and E122. E122 serves as a coordination point for Mg(2+). The region spanning 160-229 (DYKSRLQELI…AKVALQQFEN (70 aa)) is the DRBM domain.

Belongs to the ribonuclease III family. As to quaternary structure, homodimer. Requires Mg(2+) as cofactor.

It localises to the cytoplasm. The enzyme catalyses Endonucleolytic cleavage to 5'-phosphomonoester.. Digests double-stranded RNA. Involved in the processing of primary rRNA transcript to yield the immediate precursors to the large and small rRNAs (23S and 16S). Processes some mRNAs, and tRNAs when they are encoded in the rRNA operon. Processes pre-crRNA and tracrRNA of type II CRISPR loci if present in the organism. The chain is Ribonuclease 3 from Dehalococcoides mccartyi (strain CBDB1).